Reading from the N-terminus, the 309-residue chain is Tagatose-6-phosphate kinase (309 aa).

It belongs to the carbohydrate kinase PfkB family. LacC subfamily.

It carries out the reaction D-tagatofuranose 6-phosphate + ATP = D-tagatofuranose 1,6-bisphosphate + ADP + H(+). It functions in the pathway carbohydrate metabolism; D-tagatose 6-phosphate degradation; D-glyceraldehyde 3-phosphate and glycerone phosphate from D-tagatose 6-phosphate: step 1/2. This is Tagatose-6-phosphate kinase from Streptococcus sanguinis (strain SK36).